The sequence spans 68 residues: MEIECPICDDGKLHEVEVLEEKKGKFKRRNAEFDAEVYIVVCKDCGTKGIVRRVRQINMESYEFPLED.

This is an uncharacterized protein from Archaeoglobus fulgidus (strain ATCC 49558 / DSM 4304 / JCM 9628 / NBRC 100126 / VC-16).